A 415-amino-acid chain; its full sequence is Multidrug resistance protein MdtA (415 aa).

Positions 1-21 (MKGSYKSRWVIVIVVVIAAIA) are cleaved as a signal peptide. Disordered stretches follow at residues 32 to 60 (SRSA…GPLA) and 392 to 415 (EAQS…GARS). Residues 399 to 415 (PEEKATSREYAKKGARS) show a composition bias toward basic and acidic residues.

The protein belongs to the membrane fusion protein (MFP) (TC 8.A.1) family. In terms of assembly, part of a tripartite efflux system composed of MdtA, MdtB and MdtC.

It is found in the cell inner membrane. In terms of biological role, the MdtABC tripartite complex confers resistance against novobiocin and deoxycholate. The polypeptide is Multidrug resistance protein MdtA (Escherichia coli (strain K12 / MC4100 / BW2952)).